Here is a 108-residue protein sequence, read N- to C-terminus: Nucleoid-associated protein HCH_02614 (108 aa).

The protein belongs to the YbaB/EbfC family. In terms of assembly, homodimer.

It is found in the cytoplasm. The protein resides in the nucleoid. Functionally, binds to DNA and alters its conformation. May be involved in regulation of gene expression, nucleoid organization and DNA protection. The chain is Nucleoid-associated protein HCH_02614 from Hahella chejuensis (strain KCTC 2396).